The chain runs to 116 residues: Large ribosomal subunit protein bL19 (116 aa).

The protein belongs to the bacterial ribosomal protein bL19 family.

Its function is as follows. This protein is located at the 30S-50S ribosomal subunit interface and may play a role in the structure and function of the aminoacyl-tRNA binding site. The chain is Large ribosomal subunit protein bL19 from Chloroflexus aggregans (strain MD-66 / DSM 9485).